Here is a 246-residue protein sequence, read N- to C-terminus: MGKRILVQRRGRGGSQFRSPSWKRDGPVRYPPLGVISGKGYVVDILHEPGLNAPVAKIVTENGVEFFNYAAEGLYVGQVVEIGKGASPKTGNIMILGEIPEGTMIFNVEKRAGDGGKFARAGGTYAVVIGQKPEENKTIIRLPSGRTVEVDSRGRATVGIVAGGGRIEKPFLKAGKKYHRARAKAWKYPTVRGKAMSPYAHPHGGGSHQKGGTPVPKTAPPGQKVGFIGSRCTGRGCVRARAQQKQ.

The segment at 197-227 (SPYAHPHGGGSHQKGGTPVPKTAPPGQKVGF) is disordered.

The protein belongs to the universal ribosomal protein uL2 family. As to quaternary structure, part of the 50S ribosomal subunit. Forms a bridge to the 30S subunit in the 70S ribosome.

Its function is as follows. One of the primary rRNA binding proteins. Required for association of the 30S and 50S subunits to form the 70S ribosome, for tRNA binding and peptide bond formation. It has been suggested to have peptidyltransferase activity; this is somewhat controversial. Makes several contacts with the 16S rRNA in the 70S ribosome. The sequence is that of Large ribosomal subunit protein uL2 from Pyrobaculum aerophilum (strain ATCC 51768 / DSM 7523 / JCM 9630 / CIP 104966 / NBRC 100827 / IM2).